Here is a 502-residue protein sequence, read N- to C-terminus: Glutamate dehydrogenase, mitochondrial (502 aa).

96–98 (HHR) contributes to the NAD(+) binding site. The substrate site is built by lysine 102 and lysine 126. Aspartate 131 contributes to the NAD(+) binding site. Lysine 138 is an active-site residue. Substrate is bound at residue serine 394.

This sequence belongs to the Glu/Leu/Phe/Val dehydrogenases family. As to quaternary structure, homohexamer.

It localises to the mitochondrion matrix. The catalysed reaction is L-glutamate + NAD(+) + H2O = 2-oxoglutarate + NH4(+) + NADH + H(+). It catalyses the reaction L-glutamate + NADP(+) + H2O = 2-oxoglutarate + NH4(+) + NADPH + H(+). Its activity is regulated as follows. Subject to allosteric regulation. Activated by AMP and ADP. In Dictyostelium discoideum (Social amoeba), this protein is Glutamate dehydrogenase, mitochondrial (gluD).